Here is a 188-residue protein sequence, read N- to C-terminus: Probable nicotinate-nucleotide adenylyltransferase (188 aa).

It belongs to the NadD family.

The catalysed reaction is nicotinate beta-D-ribonucleotide + ATP + H(+) = deamido-NAD(+) + diphosphate. It functions in the pathway cofactor biosynthesis; NAD(+) biosynthesis; deamido-NAD(+) from nicotinate D-ribonucleotide: step 1/1. Functionally, catalyzes the reversible adenylation of nicotinate mononucleotide (NaMN) to nicotinic acid adenine dinucleotide (NaAD). The chain is Probable nicotinate-nucleotide adenylyltransferase from Salinispora tropica (strain ATCC BAA-916 / DSM 44818 / JCM 13857 / NBRC 105044 / CNB-440).